The primary structure comprises 68 residues: Large ribosomal subunit protein bL35 (68 aa).

It belongs to the bacterial ribosomal protein bL35 family.

This is Large ribosomal subunit protein bL35 from Persephonella marina (strain DSM 14350 / EX-H1).